A 205-amino-acid chain; its full sequence is Small ribosomal subunit protein uS2 (205 aa).

Belongs to the universal ribosomal protein uS2 family.

In Aeropyrum pernix (strain ATCC 700893 / DSM 11879 / JCM 9820 / NBRC 100138 / K1), this protein is Small ribosomal subunit protein uS2 (rps2).